Consider the following 159-residue polypeptide: MHISIAAVGKLKEKYLIAGVQEYTKRLSAYAKIEIIEVADEKTPERASELEEEQIKQREGERLLAKIPHDAHVIALAIEGKMKSSEQFAARLDELATYGKSKVVFVIGGSLGLSKQVMARADEALSFSKMTFPHQLMRLILLEQIYRAFRINRGEPYHK.

S-adenosyl-L-methionine contacts are provided by residues Leu76, Gly108, and 127–132 (FSKMTF).

This sequence belongs to the RNA methyltransferase RlmH family. Homodimer.

The protein localises to the cytoplasm. It catalyses the reaction pseudouridine(1915) in 23S rRNA + S-adenosyl-L-methionine = N(3)-methylpseudouridine(1915) in 23S rRNA + S-adenosyl-L-homocysteine + H(+). Functionally, specifically methylates the pseudouridine at position 1915 (m3Psi1915) in 23S rRNA. The polypeptide is Ribosomal RNA large subunit methyltransferase H (Geobacillus thermodenitrificans (strain NG80-2)).